We begin with the raw amino-acid sequence, 219 residues long: Ribosomal RNA small subunit methyltransferase I (219 aa).

Belongs to the methyltransferase superfamily. RsmI family.

Its subcellular location is the cytoplasm. The catalysed reaction is cytidine(1402) in 16S rRNA + S-adenosyl-L-methionine = 2'-O-methylcytidine(1402) in 16S rRNA + S-adenosyl-L-homocysteine + H(+). Its function is as follows. Catalyzes the 2'-O-methylation of the ribose of cytidine 1402 (C1402) in 16S rRNA. This chain is Ribosomal RNA small subunit methyltransferase I, found in Coprothermobacter proteolyticus (strain ATCC 35245 / DSM 5265 / OCM 4 / BT).